Reading from the N-terminus, the 146-residue chain is Hemoglobin subunit beta (146 aa).

Valine 1 bears the N-acetylvaline mark. Residues histidine 2–histidine 146 enclose the Globin domain. Residue threonine 12 is modified to Phosphothreonine. Serine 44 is modified (phosphoserine). Position 59 is an N6-acetyllysine (lysine 59). Histidine 63 lines the heme b pocket. An N6-acetyllysine modification is found at lysine 82. Histidine 92 provides a ligand contact to heme b. Cysteine 93 carries the post-translational modification S-nitrosocysteine. Lysine 144 carries the N6-acetyllysine modification.

The protein belongs to the globin family. Heterotetramer of two alpha chains and two beta chains. In terms of tissue distribution, red blood cells.

Functionally, involved in oxygen transport from the lung to the various peripheral tissues. The chain is Hemoglobin subunit beta (HBB) from Aotus trivirgatus (Three-striped night monkey).